Here is a 201-residue protein sequence, read N- to C-terminus: MLLMIDNYDSFTYNLVQYFGELKAEVKVVRNDELSVEQIEALAPERIVLSPGPCTPNEAGVSLAVIERFAGKLPLLGVCLGHQSIGQAFGGEVVRARQVMHGKTSPIHHKDLGVFAGLANPLTVTRYHSLVVKRESLPECLEVTAWTQHADGSLDEIMGVRHKTLNVEGVQFHPESILTEQGHELLANFLRQQGGVRGEGN.

The region spanning 1–199 (MLLMIDNYDS…LRQQGGVRGE (199 aa)) is the Glutamine amidotransferase type-1 domain. 52 to 54 (GPC) is a binding site for L-glutamine. Residue Cys79 is the Nucleophile; for GATase activity of the active site. Residues Gln83 and 129–130 (SL) contribute to the L-glutamine site. Active-site for GATase activity residues include His173 and Glu175.

As to quaternary structure, heterotetramer consisting of two non-identical subunits: a beta subunit (TrpG) and a large alpha subunit (TrpE).

The enzyme catalyses chorismate + L-glutamine = anthranilate + pyruvate + L-glutamate + H(+). It participates in amino-acid biosynthesis; L-tryptophan biosynthesis; L-tryptophan from chorismate: step 1/5. In terms of biological role, part of a heterotetrameric complex that catalyzes the two-step biosynthesis of anthranilate, an intermediate in the biosynthesis of L-tryptophan. In the first step, the glutamine-binding beta subunit (TrpG) of anthranilate synthase (AS) provides the glutamine amidotransferase activity which generates ammonia as a substrate that, along with chorismate, is used in the second step, catalyzed by the large alpha subunit of AS (TrpE) to produce anthranilate. In the absence of TrpG, TrpE can synthesize anthranilate directly from chorismate and high concentrations of ammonia. This is Anthranilate synthase component 2 from Pseudomonas aeruginosa (strain ATCC 15692 / DSM 22644 / CIP 104116 / JCM 14847 / LMG 12228 / 1C / PRS 101 / PAO1).